The primary structure comprises 83 residues: Small ribosomal subunit protein uS17 (83 aa).

Belongs to the universal ribosomal protein uS17 family. In terms of assembly, part of the 30S ribosomal subunit.

In terms of biological role, one of the primary rRNA binding proteins, it binds specifically to the 5'-end of 16S ribosomal RNA. This is Small ribosomal subunit protein uS17 from Chlamydia trachomatis serovar L2 (strain ATCC VR-902B / DSM 19102 / 434/Bu).